Consider the following 166-residue polypeptide: Putative 4-hydroxy-4-methyl-2-oxoglutarate aldolase (166 aa).

Substrate-binding positions include 74–77 and arginine 96; that span reads GDQI. Aspartate 97 lines the a divalent metal cation pocket.

Belongs to the class II aldolase/RraA-like family. Homotrimer. Requires a divalent metal cation as cofactor.

The enzyme catalyses 4-hydroxy-4-methyl-2-oxoglutarate = 2 pyruvate. It carries out the reaction oxaloacetate + H(+) = pyruvate + CO2. Its function is as follows. Catalyzes the aldol cleavage of 4-hydroxy-4-methyl-2-oxoglutarate (HMG) into 2 molecules of pyruvate. Also contains a secondary oxaloacetate (OAA) decarboxylase activity due to the common pyruvate enolate transition state formed following C-C bond cleavage in the retro-aldol and decarboxylation reactions. In Xanthomonas axonopodis pv. citri (strain 306), this protein is Putative 4-hydroxy-4-methyl-2-oxoglutarate aldolase.